Consider the following 602-residue polypeptide: UvrABC system protein C (602 aa).

The GIY-YIG domain occupies 17 to 94 (KTSGCYKMYS…IKKYKPTYNI (78 aa)). In terms of domain architecture, UVR spans 199-234 (SKLLNDIEIKMKEVIMKENFEAAIKLKETKKSLIEI).

The protein belongs to the UvrC family. In terms of assembly, interacts with UvrB in an incision complex.

Its subcellular location is the cytoplasm. In terms of biological role, the UvrABC repair system catalyzes the recognition and processing of DNA lesions. UvrC both incises the 5' and 3' sides of the lesion. The N-terminal half is responsible for the 3' incision and the C-terminal half is responsible for the 5' incision. This is UvrABC system protein C from Borrelia duttonii (strain Ly).